The sequence spans 860 residues: M-phase phosphoprotein 8 (860 aa).

The residue at position 1 (Met-1) is an N-acetylmethionine. Ser-51, Ser-85, Ser-136, and Ser-138 each carry phosphoserine. One can recognise a Chromo domain in the interval 59–118 (FEVEKILDMKTEGGKVLYKVRWKGYTSDDDTWEPEIHLEDCKEVLLEFRKKIAENKAKAV). The histone H3K9me3 binding stretch occupies residues 80-87 (WKGYTSDD). Polar residues predominate over residues 129–141 (NDIFEANSDSDQQ). The interval 129 to 191 (NDIFEANSDS…SKPDLESSLE (63 aa)) is disordered. Residue Thr-144 is modified to Phosphothreonine. Ser-149 and Ser-164 each carry phosphoserine; by CDK1. Basic and acidic residues-rich tracts occupy residues 159–169 (QREEKSPDDLK) and 177–186 (KLKDKSKPDL). Phosphoserine occurs at positions 188, 189, and 192. Residues 206-249 (AKEELKESKKPKKDEVKETKELKKVKKGEIRDLKTKTREDPKEN) show a composition bias toward basic and acidic residues. Positions 206–440 (AKEELKESKK…GRKEPKGLKT (235 aa)) are disordered. A compositionally biased stretch (low complexity) spans 259-268 (ESQVESESSV). A phosphoserine mark is found at Ser-266, Ser-272, and Ser-279. Basic and acidic residues predominate over residues 280-314 (EGLHSDSREEKQNTKSARERAGQDMGLEHGFEKPL). Ser-319 is modified (phosphoserine). At Thr-334 the chain carries Phosphothreonine; by CDK1. Positions 336-377 (RKAEDTRENRKLENKNAFLEKKTVPKKQRNQDRSKSAAELEK) are enriched in basic and acidic residues. Thr-385 is subject to Phosphothreonine; by CDK1. Ser-392, Ser-400, and Ser-403 each carry phosphoserine. The segment covering 408–440 (KETKRNESKEKYQKRHDSDKEEKGRKEPKGLKT) has biased composition (basic and acidic residues). An interaction with humanin region spans residues 431–560 (GRKEPKGLKT…HLDGKDENFA (130 aa)). Thr-454 carries the phosphothreonine modification. A disordered region spans residues 458–496 (KNDVSENNRKREEIPLDFKTIDDHKTKENKQSLKERRNT). 4 ANK repeats span residues 600–629 (SGMTLVMLAAAGGQDDLLRLLITKGAKVNG), 633–662 (NGTTALIHAAEKNFLTTVAILLEAGAFVNV), 666–695 (NGETALMKACKRGNSDIVRLVIECGADCNI), and 699–728 (HQNSALHFAKQSNNVLVYDLLKNHLETLSR).

Homodimer. Interacts (via chromo domain) with histone H3K9me3. Has the highest affinity for H3K9me3, and lesser affinity for H3K9me2 and H3K9me1. Component of the HUSH complex; at least composed of TASOR, PPHLN1 and MPHOSPH8. Interacts with DNMT3, EHMT1 and SETDB1. Interacts with MORC2; the interaction associateS MORC2 with the HUSH complex which recruits MORC2 to heterochromatic loci. Interacts with ZNF638; leading to recruitment of the HUSH complex to unintegrated retroviral DNA. Interacts with TASOR. Interacts with humanin. Phosphorylated in M (mitotic) phase. Phosphorylation by CDK1 promotes dissociation from chromatin.

The protein resides in the nucleus. Its subcellular location is the chromosome. Heterochromatin component that specifically recognizes and binds methylated 'Lys-9' of histone H3 (H3K9me) and promotes recruitment of proteins that mediate epigenetic repression. Mediates recruitment of the HUSH complex to H3K9me3 sites: the HUSH complex is recruited to genomic loci rich in H3K9me3 and is required to maintain transcriptional silencing by promoting recruitment of SETDB1, a histone methyltransferase that mediates further deposition of H3K9me3, as well as MORC2. Binds H3K9me and promotes DNA methylation by recruiting DNMT3A to target CpG sites; these can be situated within the coding region of the gene. Mediates down-regulation of CDH1 expression. Also represses L1 retrotransposons in collaboration with MORC2 and, probably, SETDB1, the silencing is dependent of repressive epigenetic modifications, such as H3K9me3 mark. Silencing events often occur within introns of transcriptionally active genes, and lead to the down-regulation of host gene expression. The HUSH complex is also involved in the silencing of unintegrated retroviral DNA by being recruited by ZNF638: some part of the retroviral DNA formed immediately after infection remains unintegrated in the host genome and is transcriptionally repressed. This Homo sapiens (Human) protein is M-phase phosphoprotein 8.